Consider the following 130-residue polypeptide: Ribosome-binding factor A (130 aa).

This sequence belongs to the RbfA family. As to quaternary structure, monomer. Binds 30S ribosomal subunits, but not 50S ribosomal subunits or 70S ribosomes.

The protein localises to the cytoplasm. One of several proteins that assist in the late maturation steps of the functional core of the 30S ribosomal subunit. Associates with free 30S ribosomal subunits (but not with 30S subunits that are part of 70S ribosomes or polysomes). Required for efficient processing of 16S rRNA. May interact with the 5'-terminal helix region of 16S rRNA. This Roseiflexus sp. (strain RS-1) protein is Ribosome-binding factor A.